The sequence spans 262 residues: Apolipoprotein A-Ia (262 aa).

The N-terminal stretch at 1 to 18 (MKFVALALTLLLALGSQA) is a signal peptide. The 3 X approximate tandem repeats stretch occupies residues 32–63 (YKAAALVYLNQVKDQAEKALDNLDGTDYEQYK). A run of 2 repeats spans residues 64–85 (LQLS…QALT) and 87–107 (YAET…ERVM). The segment at 64–262 (LQLSESLTKL…YETIAKAIQA (199 aa)) is 10 X approximate tandem repeats. The 3; half-length repeat unit spans residues 108–118 (TDVEDLRSKLE). 5 tandem repeats follow at residues 119–140 (PHRA…EKLE), 141–162 (PVFQ…AKLE), 163–184 (PLMD…SKVV), 185–206 (PMVE…TMAA), and 207–228 (PYAE…EKIA). The 9; half-length repeat unit spans residues 229-239 (PHTQDLQTRME). Copy 10 of the repeat occupies 240-262 (PYMENVRTTFAQMYETIAKAIQA).

This sequence belongs to the apolipoprotein A1/A4/E family. In terms of assembly, homodimer. Interacts with naxe and yjefn3.

It is found in the secreted. Its function is as follows. Participates in the reverse transport of cholesterol from tissues to the liver for excretion by promoting cholesterol efflux from tissues and by acting as a cofactor for the lecithin cholesterol acyltransferase (LCAT). The protein is Apolipoprotein A-Ia of Danio rerio (Zebrafish).